A 103-amino-acid chain; its full sequence is Large ribosomal subunit protein bL21 (103 aa).

Belongs to the bacterial ribosomal protein bL21 family. In terms of assembly, part of the 50S ribosomal subunit. Contacts protein L20.

Its function is as follows. This protein binds to 23S rRNA in the presence of protein L20. This chain is Large ribosomal subunit protein bL21, found in Aliivibrio salmonicida (strain LFI1238) (Vibrio salmonicida (strain LFI1238)).